We begin with the raw amino-acid sequence, 612 residues long: Phosphomethylpyrimidine synthase (612 aa).

Disordered regions lie at residues 1-33 (MTIKDARTPASTQNTAQADTAENTDTAEDTEAG) and 105-146 (AGRP…RDGN). Positions 12–24 (TQNTAQADTAENT) are enriched in low complexity. Positions 105 to 117 (AGRPVRPEDDGIK) are enriched in basic and acidic residues. Residues Asn213, Met242, Tyr271, His307, 327–329 (SRG), 368–371 (DGLR), and Glu407 contribute to the substrate site. His411 is a Zn(2+) binding site. Position 434 (Tyr434) interacts with substrate. His475 contacts Zn(2+). Residues Cys555, Cys558, and Cys563 each coordinate [4Fe-4S] cluster.

This sequence belongs to the ThiC family. It depends on [4Fe-4S] cluster as a cofactor.

It catalyses the reaction 5-amino-1-(5-phospho-beta-D-ribosyl)imidazole + S-adenosyl-L-methionine = 4-amino-2-methyl-5-(phosphooxymethyl)pyrimidine + CO + 5'-deoxyadenosine + formate + L-methionine + 3 H(+). The protein operates within cofactor biosynthesis; thiamine diphosphate biosynthesis. Its function is as follows. Catalyzes the synthesis of the hydroxymethylpyrimidine phosphate (HMP-P) moiety of thiamine from aminoimidazole ribotide (AIR) in a radical S-adenosyl-L-methionine (SAM)-dependent reaction. The chain is Phosphomethylpyrimidine synthase from Streptomyces coelicolor (strain ATCC BAA-471 / A3(2) / M145).